A 461-amino-acid chain; its full sequence is Putative dipeptidase CPSG_01350 (461 aa).

A compositionally biased stretch (basic and acidic residues) spans 1–10; the sequence is MSARDNEKGS. The segment at 1 to 31 is disordered; that stretch reads MSARDNEKGSARSQPSHAAASEIENVPRPSR. A helical transmembrane segment spans residues 35 to 52; that stretch reads WTGTMIKVFIICACAGIV. Zn(2+) contacts are provided by His90, Asp92, and Glu203. An intrachain disulfide couples Cys142 to Cys232. His230 contributes to the substrate binding site. The Zn(2+) site is built by His274 and His295. Positions 306 and 366 each coordinate substrate. N-linked (GlcNAc...) asparagine glycosylation occurs at Asn379.

This sequence belongs to the metallo-dependent hydrolases superfamily. Peptidase M19 family. The cofactor is Zn(2+).

Its subcellular location is the membrane. It catalyses the reaction an L-aminoacyl-L-amino acid + H2O = 2 an L-alpha-amino acid. Functionally, hydrolyzes a wide range of dipeptides. This chain is Putative dipeptidase CPSG_01350, found in Coccidioides posadasii (strain RMSCC 757 / Silveira) (Valley fever fungus).